The primary structure comprises 86 residues: uncharacterized protein (86 aa).

This is an uncharacterized protein from Ovis aries (Sheep).